A 949-amino-acid chain; its full sequence is MDLVYGLVWLLTVLLEGISGQGVYAPPTVRIVHSGLACNIEEERYSERVYTIREGETLELTCLVTGHPRPQIRWTKTAGSASDRFQDSSVFNETLRITSIQRHQGGRYYCKAENGLGSPAIKSIRVDVYYLDDPVVTVHQSIGEAKEQFYYERTVFLRCVANSNPPVRYSWRRGQEVLLQGSDKGVEIYEPFFTQGETKILKLKNLRPQDYANYSCIASVRNVCNIPDKMVSFRLSNKTASPSIKLLVDDPIVVNPGEAITLVCVTTGGEPMPSLTWVRSFGTLPEKIVLNGGTLTIPAITSDDAGTYSCIANNNVGNPAKKSTNIIVRALKKGRFWITPDPYHKDDNIQIGREVKISCQVEAVPSEELTFSWFKNGRPLRSSERMVITQTDPDVSPGTTNLDIIDLKFTDFGTYTCVASLKGGGISDISIDVNISSSTVPPNLTVPQEKSPLVTREGDTIELQCQVTGKPKPIILWSRADKEVAMPDGTMQMESYDGTLRIVNVSREMSGMYRCQTSQYNGFNVKPREALVQLIVQYPPAVEPAFLEIRQGQDRSVTMSCRVLRAYPIRVLTYEWRLGNKLLRTGQFDSQEYTEYPLKSLSNENYGVYNCSIINEAGAGRCSFLVTGKAYAPEFYYDTYNPVWQNRHRVYSYSLQWTQMNPDAVDRIVAYRLGIRQAGQQRWWEQEIKINGNIQKGELITYNLTELIKPEAYEVRLTPLTKFGEGDSTIRVIKYTGEFHCGFEDGNICLFTQDDTDNFDWTKQSTATRNTKYTPNTGPNADRSGSKEGFYMYIETSRPRLEGEKARLLSPVFSIAPKNPYGPTNSAYCFSFFYHMYGQHIGVLNVYLRLKGQTTIENPLWSSSGNKGQRWNEAHVNIYPITSFQLIFEGIRGPGIEGDIAIDDVSIAEGECAKQDLPTKNSVDGAVGILVHIWLFPVIILISILSPRR.

A signal peptide spans 1-25 (MDLVYGLVWLLTVLLEGISGQGVYA). Ig-like domains lie at 27 to 127 (PTVR…IRVD) and 134 to 232 (PVVT…KMVS). Intrachain disulfides connect Cys62-Cys110 and Cys159-Cys216. N-linked (GlcNAc...) asparagine glycosylation is found at Asn92, Asn213, and Asn237. Ig-like domains follow at residues 242-328 (PSIK…NIIV), 340-436 (PDPY…VNIS), 442-533 (PNLT…ALVQ), and 540-627 (PAVE…FLVT). 2 disulfide bridges follow: Cys264-Cys310 and Cys359-Cys417. Residues Asn434, Asn443, Asn504, Asn610, and Asn703 are each glycosylated (N-linked (GlcNAc...) asparagine). 2 disulfide bridges follow: Cys465/Cys515 and Cys561/Cys611. The Fibronectin type-III domain maps to 638–738 (DTYNPVWQNR…TIRVIKYTGE (101 aa)). One can recognise an MAM domain in the interval 739–914 (FHCGFEDGNI…VSIAEGECAK (176 aa)). Asp924 is lipidated: GPI-anchor amidated aspartate. Residues 925 to 949 (GAVGILVHIWLFPVIILISILSPRR) constitute a propeptide, removed in mature form.

Interacts (through the Ig-like domains) with NLGN2. In terms of tissue distribution, expressed predominantly in neuronal tissue. Expressed in brain.

It is found in the cell membrane. Functionally, may be involved in cell-cell interactions. The protein is MAM domain-containing glycosylphosphatidylinositol anchor protein 2 (Mdga2) of Rattus norvegicus (Rat).